The following is a 260-amino-acid chain: Ras-related protein Rab-32B (260 aa).

Positions 11-50 (FDTDPDVSTDSNYNNNNNSNNNNSIISNSNNNNNNNNNNV) are disordered. Over residues 21-49 (SNYNNNNNSNNNNSIISNSNNNNNNNNNN) the composition is skewed to low complexity. 66 to 73 (GDYAVGKS) is a GTP binding site. The Effector region signature appears at 88–96 (YKLTIGVDF). GTP-binding positions include 115–119 (DIAGH) and 177–180 (NKSD). The disordered stretch occupies residues 231-260 (TNHPPKPEEDTLELTKTNGEKSDDSKSCCK). Basic and acidic residues predominate over residues 248-260 (NGEKSDDSKSCCK). Residues Cys258 and Cys259 are each lipidated (S-geranylgeranyl cysteine).

Belongs to the small GTPase superfamily. Rab family.

The polypeptide is Ras-related protein Rab-32B (rab32B) (Dictyostelium discoideum (Social amoeba)).